The sequence spans 412 residues: Transcription termination factor 3, mitochondrial (412 aa).

A mitochondrion-targeting transit peptide spans 1–67 (MALLAQQLPR…IKTYRTLFWN (67 aa)).

Belongs to the mTERF family.

It is found in the mitochondrion. Its function is as follows. Binds promoter DNA and regulates initiation of transcription. Required for normal mitochondrial transcription and translation, and for normal assembly of mitochondrial respiratory complexes. Required for normal mitochondrial function. Maintains 16S rRNA levels and functions in mitochondrial ribosome assembly by regulating the biogenesis of the 39S ribosomal subunit. The chain is Transcription termination factor 3, mitochondrial (Mterf3) from Mus musculus (Mouse).